A 287-amino-acid polypeptide reads, in one-letter code: Nucleotide-binding protein VIBHAR_03667 (287 aa).

8-15 serves as a coordination point for ATP; sequence GHSGAGKS. 56 to 59 is a GTP binding site; that stretch reads DIRN.

The protein belongs to the RapZ-like family.

In terms of biological role, displays ATPase and GTPase activities. The polypeptide is Nucleotide-binding protein VIBHAR_03667 (Vibrio campbellii (strain ATCC BAA-1116)).